We begin with the raw amino-acid sequence, 471 residues long: UDP-N-acetylmuramate--L-alanine ligase (471 aa).

114 to 120 lines the ATP pocket; sequence GTHGKTT.

It belongs to the MurCDEF family.

The protein localises to the cytoplasm. The enzyme catalyses UDP-N-acetyl-alpha-D-muramate + L-alanine + ATP = UDP-N-acetyl-alpha-D-muramoyl-L-alanine + ADP + phosphate + H(+). Its pathway is cell wall biogenesis; peptidoglycan biosynthesis. Its function is as follows. Cell wall formation. This Sinorhizobium medicae (strain WSM419) (Ensifer medicae) protein is UDP-N-acetylmuramate--L-alanine ligase.